The primary structure comprises 1220 residues: MRFGLPSKLELTPPFRIGIRTQLTALVSIVALGSLIILAVTTGVYFTSNYKNLRSDRLYIAAQLKSSQIDQTLNYLYYQAYYLASRDALQSSLTSYVAGNKSADNWVDSLSVIQKFLSSSNLFYVAKVYDSSFNAVLNATNNGTGDLIPEDVLDSLFPLSTDTPLPSSLETIGILTDPVLNSTDYLMSMSLPIFANPSIILTDSRVYGYITIIMSAEGLKSVFNDTTALEHSTIAIISAVYNSQGKASGYHFVFPPYGSRSDLPQKVFSIKNDTFISSAFRNGKGGSLKQTNILSTRNTALGYSPCSFNLVNWVAIVSQPESVFLSPATKLAKIITGTVIAIGVFVILLTLPLAHWAVQPIVRLQKATELITEGRGLRPSTPRTISRASSFKRGFSSGFAVPSSLLQFNTAEAGSTTSVSGHGGSGHGSGAAFSANSSMKSAINLGNEKMSPPEEENKIPNNHTDAKISMDGSLNHDLLGPHSLRHNDTDRSSNRSHILTTSANLTEARLPDYRRLFSDELSDLTETFNTMTDALDQHYALLEERVRARTKQLEAAKIEAEAANEAKTVFIANISHELRTPLNGILGMTAISMEETDVNKIRNSLKLIFRSGELLLHILTELLTFSKNVLQRTKLEKRDFCITDVALQIKSIFGKVAKDQRVRLSISLFPNLIRTMVLWGDSNRIIQIVMNLVSNALKFTPVDGTVDVRMKLLGEYDKELSEKKQYKEVYIKKGTEVTENLETTDKYDLPTLSNHRKSVDLESSATSLGSNRDTSTIQEEITKRNTVANESIYKKVNDREKASNDDVSSIVSTTTSSYDNAIFNSQFNKAPGSDDEEGGNLGRPIENPKTWVISIEVEDTGPGIDPSLQESVFHPFVQGDQTLSRQYGGTGLGLSICRQLANMMHGTMKLESKVGVGSKFTFTLPLNQTKEISFADMEFPFEDEFNPESRKNRRVKFSVAKSIKSRQSTSSVATPATNRSSLTNDVLPEVRSKGKHETKDVGNPNMGREEKNDNGGLEQLQEKNIKPSICLTGAEVNEQNSLSSKHRSRHEGLGSVNLDRPFLQSTGTATSSRNIPTVKDDDKNETSVKILVVEDNHVNQEVIKRMLNLEGIENIELACDGQEAFDKVKELTSKGENYNMIFMDVQMPKVDGLLSTKMIRRDLGYTSPIVALTAFADDSNIKECLESGMNGFLSKPIKRPKLKTILTEFCAAYQGKKNNK.

The Cytoplasmic portion of the chain corresponds to 1–22 (MRFGLPSKLELTPPFRIGIRTQ). A helical membrane pass occupies residues 23 to 46 (LTALVSIVALGSLIILAVTTGVYF). Residues 47 to 333 (TSNYKNLRSD…FLSPATKLAK (287 aa)) lie on the Extracellular side of the membrane. 6 N-linked (GlcNAc...) asparagine glycosylation sites follow: asparagine 100, asparagine 138, asparagine 142, asparagine 181, asparagine 224, and asparagine 272. A helical transmembrane segment spans residues 334-354 (IITGTVIAIGVFVILLTLPLA). The Cytoplasmic portion of the chain corresponds to 355-1220 (HWAVQPIVRL…AAYQGKKNNK (866 aa)). 2 disordered regions span residues 414–433 (GSTTSVSGHGGSGHGSGAAF) and 444–500 (NLGN…HILT). The segment covering 451–468 (SPPEEENKIPNNHTDAKI) has biased composition (basic and acidic residues). The residue at position 502 (serine 502) is a Phosphoserine. One can recognise a Histidine kinase domain in the interval 573-928 (NISHELRTPL…KFTFTLPLNQ (356 aa)). Histidine 576 carries the post-translational modification Phosphohistidine; by autocatalysis. Serine 758 and serine 833 each carry phosphoserine. 2 disordered regions span residues 960–1016 (AKSI…DNGG) and 1040–1081 (NSLS…VKDD). The span at 965–984 (SRQSTSSVATPATNRSSLTN) shows a compositional bias: polar residues. Positions 988–1000 (PEVRSKGKHETKD) are enriched in basic and acidic residues. Phosphoserine occurs at positions 1041 and 1044. A compositionally biased stretch (polar residues) spans 1063 to 1075 (LQSTGTATSSRNI). The Response regulatory domain occupies 1089-1210 (KILVVEDNHV…KLKTILTEFC (122 aa)). Glutamate 1094, aspartate 1095, aspartate 1144, and lysine 1195 together coordinate Mg(2+). Residue aspartate 1144 is modified to 4-aspartylphosphate.

In terms of assembly, interacts with DJP1, MOG1 and YPD1. Post-translationally, the phosphorelay mechanism involves the sequential transfer of a phosphate group from His-576 (H1) in the histidine kinase domain (transmitter domain) to Asp-1144 (D1) of the response regulatory domain (receiver domain). This transfer probably occurs between two SLN1 molecules, rather than intramolecularly. The phosphate group is further transferred to 'His-64' (H2) of YPD1 and finally to 'Asp-554' (D2) of SSK1 or 'Asp-427' (D2) of SKN7.

The protein localises to the cell membrane. The enzyme catalyses ATP + protein L-histidine = ADP + protein N-phospho-L-histidine.. In terms of biological role, histidine kinase that acts as an osmosensor at the plasma membrane. Part of the bifurcated SLN1-YPD1-SKN7/SSK1 two-component regulatory system, which controls activity of the HOG1 pathway and gene expression in response to changes in the osmolarity of the extracellular environment. Under normal osmotic conditions, the histidine kinase autophosphorylates His-576. This phosphate is subsequently transferred to Asp-1144, from where it is relayed to 'His-64' of the phosphorelay intermediate protein YPD1. Under high osmolarity conditions, the histidine kinase is no longer active. This is Osmosensing histidine protein kinase SLN1 (SLN1) from Saccharomyces cerevisiae (strain ATCC 204508 / S288c) (Baker's yeast).